The primary structure comprises 78 residues: UPF0349 protein YuzB (78 aa).

Belongs to the UPF0349 family.

This is UPF0349 protein YuzB (yuzB) from Bacillus subtilis (strain 168).